The primary structure comprises 397 residues: Dual oxidase maturation factor 1 (397 aa).

Helical transmembrane passes span 26–46 (FVIF…LPGV) and 57–77 (YVLM…PCWA). N-linked (GlcNAc...) asparagine glycosylation is present at Asn-109. Helical transmembrane passes span 191–211 (AAIW…LFLP), 218–238 (ILAT…LSPC), and 261–281 (CFYL…GLGI). The interval 324-376 (YGTNTTNSSRDKNDISSDKTAGSSGFQSRTSTCQSSASSASLRSQSSIETVHD) is disordered. N-linked (GlcNAc...) asparagine glycosylation is found at Asn-327 and Asn-330. Residues 341 to 350 (DKTAGSSGFQ) are compositionally biased toward polar residues. Over residues 351–370 (SRTSTCQSSASSASLRSQSS) the composition is skewed to low complexity.

The protein belongs to the DUOXA family. As to quaternary structure, interacts with bli-3 and tsp-15. Interacts with csnk-1. Expressed in the hypodermis, specifically in seam cells, the terminal bulb of the pharynx, the distal region of the gonadal arm, vulva, spermatheca and uterus.

The protein localises to the membrane. Functionally, plays a role in cuticle biogenesis. In complex with tsp-15 and the dual oxidase bli-3, promotes the generation of reactive oxygen species (ROS) and tyrosine cross-linking of collagen, thus stabilizing cuticular extracellular matrix. The sequence is that of Dual oxidase maturation factor 1 from Caenorhabditis elegans.